The sequence spans 705 residues: Variediene synthase (705 aa).

Positions 9–331 (LNSTLSSVVE…RCPRYHPWLC (323 aa)) are terpene cyclase. Residue Asp100 participates in Mg(2+) binding. Residues Asp100, 186-189 (RIID), Asn230, 234-238 (SFDIE), and 325-326 (RY) contribute to the substrate site. Residues 100-104 (DNVVE) carry the DDXXD 1 motif. The short motif at 230–238 (NDYFSFDIE) is the NSE/DTE element. The tract at residues 332–705 (KEAASLLHQD…VRLLIHRLKV (374 aa)) is prenyltransferase. Positions 349-366 (GRKPQALEEYRSRSHSES) are enriched in basic and acidic residues. The disordered stretch occupies residues 349–374 (GRKPQALEEYRSRSHSESDLSDASPT). Isopentenyl diphosphate is bound by residues Lys424, Arg427, and His456. Residues Asp463 and Asp467 each contribute to the Mg(2+) site. The DDXXD 2 motif lies at 463–467 (DDIED). Arg472 lines the dimethylallyl diphosphate pocket. Arg473 contributes to the isopentenyl diphosphate binding site. Residues Lys550, Thr551, Gln589, Asn596, Lys605, and Lys615 each coordinate dimethylallyl diphosphate.

In the N-terminal section; belongs to the terpene synthase family. It in the C-terminal section; belongs to the FPP/GGPP synthase family. Hexamer. Requires Mg(2+) as cofactor.

It catalyses the reaction isopentenyl diphosphate + (2E,6E)-farnesyl diphosphate = (2E,6E,10E)-geranylgeranyl diphosphate + diphosphate. The catalysed reaction is isopentenyl diphosphate + (2E,6E,10E)-geranylgeranyl diphosphate = (2E,6E,10E,14E)-geranylfarnesyl diphosphate + diphosphate. The enzyme catalyses (2E,6E,10E)-geranylgeranyl diphosphate = variediene + diphosphate. It carries out the reaction (2E,6E,10E,14E)-geranylfarnesyl diphosphate = (R,2E)-alpha-cericerene + diphosphate. It participates in secondary metabolite biosynthesis; terpenoid biosynthesis. In terms of biological role, bifunctional terpene synthase that converts dimethylallyl diphosphate (DMAPP) and isopentenyl diphosphate (IPP) into variediene as a single product. The C-terminal prenyltransferase (PT) domain of EvVS catalyzes formation of geranylgeranyl pyrophosphate (GGPP), whereas the N-terminal terpene cyclase (TC) domain catalyzes the cyclization of GGPP to variediene. The PT domain can also synthesize geranylfarnesyl pyrophosphate (GFPP) from the C5 isoprene units in vitro, while the TC domain is able to cyclize GFPP to the sesterterpene (2E)-alpha-cericerene. The protein is Variediene synthase of Emericella variicolor (Aspergillus stellatus).